The sequence spans 257 residues: Ribonuclease HII (257 aa).

Residues 72-257 (TYIAGIDEVG…FAPIKDMIQK (186 aa)) form the RNase H type-2 domain. The a divalent metal cation site is built by aspartate 78, glutamate 79, and aspartate 170.

The protein belongs to the RNase HII family. Mn(2+) serves as cofactor. The cofactor is Mg(2+).

The protein localises to the cytoplasm. The catalysed reaction is Endonucleolytic cleavage to 5'-phosphomonoester.. Its function is as follows. Endonuclease that specifically degrades the RNA of RNA-DNA hybrids. This Bacillus thuringiensis (strain Al Hakam) protein is Ribonuclease HII.